The primary structure comprises 208 residues: Sodium/potassium-transporting ATPase subunit beta-1-interacting protein 2 (208 aa).

The next 4 helical transmembrane spans lie at 1–23 (MGYCSGRCTLIFICGMQLVCVLE), 35–55 (APILANFVHIIIVILGLFGTI), 62–82 (ITGYAVWLVLWVTWNVFVICF), and 153–173 (LQIVLALAGFIYACYVVKCIT).

Belongs to the NKAIN family. As to quaternary structure, interacts with ATP1B1. In terms of tissue distribution, expressed in fetal brain. Weakly expressed in adult brain and thymus. Not expressed in any other normal tissue examined.

The protein resides in the cell membrane. The protein is Sodium/potassium-transporting ATPase subunit beta-1-interacting protein 2 (NKAIN2) of Homo sapiens (Human).